A 260-amino-acid polypeptide reads, in one-letter code: MSIRIKIDKLRQIVAYFSEFSEEVSINVDSTDELMYIFAALGGSVNIWAIIPLSASVFYRGAENIVFNLPVSKVKSCLCSFHNDAIIDIEPDLENNLVKLSSYHVVSVDCNKELMPIRTDTTICLSIDQKKSYVFNFHKYEEKCCGRTVIHLEWLLGFIKCISQHQHLAIMFKDDNIIMKTPGNTDAFSREYSMTECSQELQKFSFKIAISSLNKLRGFKKRVNVFETRIVMDNDDNILGMLFSDRVQSFKINIFMTFLD.

Belongs to the chordopoxvirinae VLTF-1 family. In terms of assembly, interacts with the late transcription factors VLTF-2 and VLTF-3. Interacts with the late transcription elongation factor VLTF-4. Interacts with itself.

In terms of biological role, associates with RNA polymerase to initiate transcription from late gene promoters. The polypeptide is Late transcription factor 1 (OPG093) (Vaccinia virus (strain Ankara) (VACV)).